The following is an 804-amino-acid chain: MRALWVLGLCCVLLTFGSVRADDEVDVDGTVEEDLGKSREGSRTDDEVVQREEEAIQLDGLNASQIRELREKSEKFAFQAEVNRMMKLIINSLYKNKEIFLRELISNASDALDKIRLISLTDENALSGNEELTVKIKCDKEKNLLHVTDTGVGMTREELVKNLGTIAKSGTSEFLNKMTEAQEDGQSTSELIGQFGVGFYSAFLVADKVIVTSKHNNDTQHIWESDSNEFSVIADPRGNTLGRGTTITLVLKEEASDYLELDTIKNLVKKYSQFINFPIYVWSSKTETVEEPMEEEEAAKEEKEESDDEAAVEEEEEEKKPKTKKVEKTVWDWELMNDIKPIWQRPSKEVEEDEYKAFYKSFSKESDDPMAYIHFTAEGEVTFKSILFVPTSAPRGLFDEYGSKKSDYIKLYVRRVFITDDFHDMMPKYLNFVKGVVDSDDLPLNVSRETLQQHKLLKVIRKKLVRKTLDMIKKIADDKYNDTFWKEFGTNIKLGVIEDHSNRTRLAKLLRFQSSHHPTDITSLDQYVERMKEKQDKIYFMAGSSRKEAESSPFVERLLKKGYEVIYLTEPVDEYCIQALPEFDGKRFQNVAKEGVKFDESEKTKESREAVEKEFEPLLNWMKDKALKDKIEKAVVSQRLTESPCALVASQYGWSGNMERIMKAQAYQTGKDISTNYYASQKKTFEINPRHPLIRDMLRRIKEDEDDKTVLDLAVVLFETATLRSGYLLPDTKAYGDRIERMLRLSLNIDPDAKVEDEPEEEPEETTEDTTEDTEQDEDEEMDVGTDEEEQETAKESTAEKDEL.

Positions 1-21 (MRALWVLGLCCVLLTFGSVRA) are cleaved as a signal peptide. The short motif at 42–44 (SRT) is the SRT pseudosubstrate motif element. N-linked (GlcNAc...) asparagine glycosylation occurs at Asn-62. At Ser-64 the chain carries Phosphoserine. An N-linked (GlcNAc...) asparagine glycan is attached at Asn-107. Residues Asn-107, Asp-149, and Asn-162 each coordinate ATP. Lys-168 bears the N6-(2-hydroxyisobutyryl)lysine mark. Position 172 is a phosphoserine (Ser-172). Residue Phe-199 participates in ATP binding. Asn-217 carries N-linked (GlcNAc...) asparagine glycosylation. Residues 288–323 (TVEEPMEEEEAAKEEKEESDDEAAVEEEEEEKKPKT) form a disordered region. Residues 289–317 (VEEPMEEEEAAKEEKEESDDEAAVEEEEE) are compositionally biased toward acidic residues. Phosphoserine is present on residues Ser-306 and Ser-403. An N6-succinyllysine modification is found at Lys-404. N-linked (GlcNAc...) asparagine glycosylation is present at Asn-445. Ser-447 carries the phosphoserine modification. An N6-acetyllysine modification is found at Lys-479. N-linked (GlcNAc...) asparagine glycans are attached at residues Asn-481 and Asn-502. Lys-633 carries the N6-succinyllysine modification. The segment at 750 to 804 (DPDAKVEDEPEEEPEETTEDTTEDTEQDEDEEMDVGTDEEEQETAKESTAEKDEL) is disordered. The segment covering 757–791 (DEPEEEPEETTEDTTEDTEQDEDEEMDVGTDEEEQ) has biased composition (acidic residues). Thr-786 bears the Phosphothreonine mark. The span at 792 to 804 (ETAKESTAEKDEL) shows a compositional bias: basic and acidic residues. A Prevents secretion from ER motif is present at residues 801-804 (KDEL).

This sequence belongs to the heat shock protein 90 family. In terms of assembly, homodimer; disulfide-linked. Component of an EIF2 complex at least composed of CELF1/CUGBP1, CALR, CALR3, EIF2S1, EIF2S2, HSP90B1 and HSPA5. Part of a large chaperone multiprotein complex comprising DNAJB11, HSP90B1, HSPA5, HYOU, PDIA2, PDIA4, PDIA6, PPIB, SDF2L1, UGGT1 and very small amounts of ERP29, but not, or at very low levels, CALR nor CANX. Interacts with AIMP1; regulates its retention in the endoplasmic reticulum. Hyperglycosylated form interacts with OS9; promoting its degradation by the endoplasmic reticulum associated degradation (ERAD). Interacts with CNPY3. This interaction is disrupted in the presence of ATP. Interacts with TLR4 and TLR9, but not with TLR3. Interacts with MZB1 in a calcium-dependent manner. Interacts with METTL23. Interacts with IL1B; the interaction facilitates cargo translocation into the ERGIC. Interacts with EIF2AK3. Phosphorylated by CK2. In terms of processing, N-glycosylated cotranslationally at Asn-217 by STT3A-containing OST-A complex: this glycosylation is constitutive. In response to various stress, 5 additional facultative sites (Asn-62, Asn-107, Asn-445, Asn-481 and Asn-502) can be glycosylated post-translationally by STT3B-containing OST-B complex, leading to a hyperglycosylated form that is degraded by the ER-associated degradation (ERAD) pathway. In normal conditions, the OST-A complex together with CCDC134 prevent glycosylation at facultative sites during protein folding, thereby preventing hyperglycosylation. Mechanistically, nascent HSP90B1 is tethered during translation to a specialized CCDC134-containing translocon that forms a microenvironment for its folding, in which STT3A associates with the SRT pseudosubstrate motif, and prevents access to facultative glycosylation sites until folding is completed, rendering its facultative sites inaccessible to the OST-B complex.

The protein localises to the endoplasmic reticulum lumen. Its subcellular location is the sarcoplasmic reticulum lumen. It localises to the melanosome. It catalyses the reaction ATP + H2O = ADP + phosphate + H(+). In terms of biological role, ATP-dependent chaperone involved in the processing of proteins in the endoplasmic reticulum, regulating their transport. Together with MESD, acts as a modulator of the Wnt pathway by promoting the folding of LRP6, a coreceptor of the canonical Wnt pathway. When associated with CNPY3, required for proper folding of Toll-like receptors. Promotes folding and trafficking of TLR4 to the cell surface. May participate in the unfolding of cytosolic leaderless cargos (lacking the secretion signal sequence) such as the interleukin 1/IL-1 to facilitate their translocation into the ERGIC (endoplasmic reticulum-Golgi intermediate compartment) and secretion; the translocation process is mediated by the cargo receptor TMED10. This Macaca fascicularis (Crab-eating macaque) protein is Endoplasmin (HSP90B1).